Consider the following 301-residue polypeptide: MGAQLSTLGHVVLSPVWFLYSLIMKLFQRSTPAITLENPDIKYPLRLIDKEVISHDTRRFRFALPSPEHILGLPVGQHIYLSARIDGNLVIRPYTPVSSDDDKGFVDLVIKVYFKDTHPKFPAGGKMSQYLESMKIGDTIEFRGPNGLLVYQGKGKFAIRPDKKSDPVIKTVKSVGMIAGGTGITPMLQVIRAIMKDPDDHTVCHLLFANQTEKDILLRPELEELRNEHSARFKLWYTVDKAPEAWDYSQGFVNEEMIRDHLPPPEEEPLVLMCGPPPMIQYACLPNLDRVGHPKERCFAF.

Residue Gly2 is the site of N-myristoyl glycine attachment. The FAD-binding FR-type domain maps to Asp40 to Gln152. Residue Lys42 is modified to N6-acetyllysine. At Tyr43 the chain carries Phosphotyrosine. The residue at position 50 (Lys50) is an N6-acetyllysine. The FAD site is built by Arg92, Pro93, Tyr94, Val109, Lys111, and Phe114. Lys120 is modified (N6-acetyllysine). Positions 126, 127, 128, and 185 each coordinate FAD.

The protein belongs to the flavoprotein pyridine nucleotide cytochrome reductase family. As to quaternary structure, component of a complex composed of cytochrome b5, NADH-cytochrome b5 reductase (CYB5R3) and MTARC2. Interacts with MTLN; the interaction is required to maintain cellular lipid composition and leads to stimulation of mitochondrial respiratory complex I activity. FAD is required as a cofactor.

The protein localises to the endoplasmic reticulum membrane. It localises to the mitochondrion outer membrane. It catalyses the reaction 2 Fe(III)-[cytochrome b5] + NADH = 2 Fe(II)-[cytochrome b5] + NAD(+) + H(+). Functionally, catalyzes the reduction of two molecules of cytochrome b5 using NADH as the electron donor. In Bos taurus (Bovine), this protein is NADH-cytochrome b5 reductase 3 (CYB5R3).